Consider the following 235-residue polypeptide: Aspartate/glutamate leucyltransferase (235 aa).

It belongs to the R-transferase family. Bpt subfamily.

The protein resides in the cytoplasm. The enzyme catalyses N-terminal L-glutamyl-[protein] + L-leucyl-tRNA(Leu) = N-terminal L-leucyl-L-glutamyl-[protein] + tRNA(Leu) + H(+). The catalysed reaction is N-terminal L-aspartyl-[protein] + L-leucyl-tRNA(Leu) = N-terminal L-leucyl-L-aspartyl-[protein] + tRNA(Leu) + H(+). Functionally, functions in the N-end rule pathway of protein degradation where it conjugates Leu from its aminoacyl-tRNA to the N-termini of proteins containing an N-terminal aspartate or glutamate. In Pseudomonas syringae pv. tomato (strain ATCC BAA-871 / DC3000), this protein is Aspartate/glutamate leucyltransferase.